We begin with the raw amino-acid sequence, 132 residues long: Agouti-signaling protein (132 aa).

The signal sequence occupies residues 1–22 (MDVTRLLLATLLVFLCFFTAYS). Residue N39 is glycosylated (N-linked (GlcNAc...) asparagine). The tract at residues 61-87 (QISRKEAEKKRSSKKEASMKKVARPRT) is disordered. Positions 63–79 (SRKEAEKKRSSKKEASM) are enriched in basic and acidic residues. Disulfide bonds link C93-C108, C100-C114, C107-C125, C111-C132, and C116-C123. The 40-residue stretch at 93 to 132 (CVATRDSCKPPAPACCDPCASCQCRFFRSACSCRVLSLNC) folds into the Agouti domain.

The protein resides in the secreted. In terms of biological role, involved in the regulation of melanogenesis. The binding of ASP to MC1R precludes alpha-MSH initiated signaling and thus blocks production of cAMP, leading to a down-regulation of eumelanogenesis (brown/black pigment) and thus increasing synthesis of pheomelanin (yellow/red pigment). The chain is Agouti-signaling protein (ASIP) from Macaca maura (Moor macaque).